The primary structure comprises 413 residues: Multifunctional CCA protein (413 aa).

Residues glycine 8 and arginine 11 each contribute to the ATP site. The CTP site is built by glycine 8 and arginine 11. Mg(2+)-binding residues include aspartate 21 and aspartate 23. ATP is bound by residues arginine 91, arginine 137, and arginine 140. 3 residues coordinate CTP: arginine 91, arginine 137, and arginine 140. The HD domain maps to threonine 228–tryptophan 329.

The protein belongs to the tRNA nucleotidyltransferase/poly(A) polymerase family. Bacterial CCA-adding enzyme type 1 subfamily. Monomer. Can also form homodimers and oligomers. The cofactor is Mg(2+). It depends on Ni(2+) as a cofactor.

It catalyses the reaction a tRNA precursor + 2 CTP + ATP = a tRNA with a 3' CCA end + 3 diphosphate. The catalysed reaction is a tRNA with a 3' CCA end + 2 CTP + ATP = a tRNA with a 3' CCACCA end + 3 diphosphate. Catalyzes the addition and repair of the essential 3'-terminal CCA sequence in tRNAs without using a nucleic acid template. Adds these three nucleotides in the order of C, C, and A to the tRNA nucleotide-73, using CTP and ATP as substrates and producing inorganic pyrophosphate. tRNA 3'-terminal CCA addition is required both for tRNA processing and repair. Also involved in tRNA surveillance by mediating tandem CCA addition to generate a CCACCA at the 3' terminus of unstable tRNAs. While stable tRNAs receive only 3'-terminal CCA, unstable tRNAs are marked with CCACCA and rapidly degraded. The sequence is that of Multifunctional CCA protein from Enterobacter sp. (strain 638).